Here is a 244-residue protein sequence, read N- to C-terminus: 6-carboxyhexanoate--CoA ligase (244 aa).

Belongs to the BioW family. As to quaternary structure, homodimer. Mg(2+) is required as a cofactor.

The catalysed reaction is heptanedioate + ATP + CoA = 6-carboxyhexanoyl-CoA + AMP + diphosphate. It participates in metabolic intermediate metabolism; pimeloyl-CoA biosynthesis; pimeloyl-CoA from pimelate: step 1/1. Catalyzes the transformation of pimelate into pimeloyl-CoA with concomitant hydrolysis of ATP to AMP. The chain is 6-carboxyhexanoate--CoA ligase from Hydrogenobacter thermophilus (strain DSM 6534 / IAM 12695 / TK-6).